We begin with the raw amino-acid sequence, 365 residues long: 3-dehydroquinate synthase (365 aa).

Residues 95 to 99, 119 to 120, lysine 132, and lysine 141 contribute to the NAD(+) site; these read GVVGD and TT. The Zn(2+) site is built by glutamate 174, histidine 238, and histidine 255.

Belongs to the sugar phosphate cyclases superfamily. Dehydroquinate synthase family. Co(2+) is required as a cofactor. The cofactor is Zn(2+). NAD(+) serves as cofactor.

The protein localises to the cytoplasm. The catalysed reaction is 7-phospho-2-dehydro-3-deoxy-D-arabino-heptonate = 3-dehydroquinate + phosphate. It participates in metabolic intermediate biosynthesis; chorismate biosynthesis; chorismate from D-erythrose 4-phosphate and phosphoenolpyruvate: step 2/7. Catalyzes the conversion of 3-deoxy-D-arabino-heptulosonate 7-phosphate (DAHP) to dehydroquinate (DHQ). The protein is 3-dehydroquinate synthase of Chlorobium chlorochromatii (strain CaD3).